Consider the following 237-residue polypeptide: Uridylate kinase (237 aa).

12–15 (KISG) contributes to the ATP binding site. UMP is bound at residue Gly54. The ATP site is built by Gly55 and Arg59. Residues Asp72 and 133 to 140 (TGNPFFST) each bind UMP. Residues Tyr166 and Asp169 each coordinate ATP.

It belongs to the UMP kinase family. In terms of assembly, homohexamer.

The protein localises to the cytoplasm. It carries out the reaction UMP + ATP = UDP + ADP. It functions in the pathway pyrimidine metabolism; CTP biosynthesis via de novo pathway; UDP from UMP (UMPK route): step 1/1. Inhibited by UTP. Its function is as follows. Catalyzes the reversible phosphorylation of UMP to UDP. The sequence is that of Uridylate kinase from Caldanaerobacter subterraneus subsp. tengcongensis (strain DSM 15242 / JCM 11007 / NBRC 100824 / MB4) (Thermoanaerobacter tengcongensis).